The sequence spans 180 residues: Segregation and condensation protein B (180 aa).

The protein belongs to the ScpB family. In terms of assembly, homodimer. Homodimerization may be required to stabilize the binding of ScpA to the Smc head domains. Component of a cohesin-like complex composed of ScpA, ScpB and the Smc homodimer, in which ScpA and ScpB bind to the head domain of Smc. The presence of the three proteins is required for the association of the complex with DNA.

It is found in the cytoplasm. Participates in chromosomal partition during cell division. May act via the formation of a condensin-like complex containing Smc and ScpA that pull DNA away from mid-cell into both cell halves. The protein is Segregation and condensation protein B of Staphylococcus aureus (strain USA300).